A 121-amino-acid chain; its full sequence is UPF0738 protein BPUM_1088 (121 aa).

Belongs to the UPF0738 family.

The protein is UPF0738 protein BPUM_1088 of Bacillus pumilus (strain SAFR-032).